A 160-amino-acid polypeptide reads, in one-letter code: Putative pre-16S rRNA nuclease (160 aa).

It belongs to the YqgF nuclease family.

Its subcellular location is the cytoplasm. Its function is as follows. Could be a nuclease involved in processing of the 5'-end of pre-16S rRNA. The chain is Putative pre-16S rRNA nuclease from Rhodopseudomonas palustris (strain HaA2).